The sequence spans 494 residues: Vacuolar-processing enzyme (494 aa).

Residues 1-20 (MTRLASGVLITLLVALAGIA) form the signal peptide. N-linked (GlcNAc...) asparagine glycosylation occurs at Asn151. Residue His178 is part of the active site. Residue Cys220 is the Nucleophile of the active site. A disulfide bridge connects residues Cys253 and Cys267. N-linked (GlcNAc...) asparagine glycosylation is present at Asn336. Disulfide bonds link Cys430–Cys460 and Cys442–Cys477.

It belongs to the peptidase C13 family. High levels are seen in the flowers, a lower level expression is seen in the leaves, while very low levels are seen in the stems and roots.

In terms of biological role, asparagine-specific endopeptidase that may be involved in processing of proteins targeted to vacuoles that accumulate during ethylene-regulated processes such as flower opening and flavedo degreening. The protein is Vacuolar-processing enzyme of Citrus sinensis (Sweet orange).